A 351-amino-acid chain; its full sequence is D-glucoside 3-dehydrogenase (351 aa).

It belongs to the Gfo/Idh/MocA family.

The enzyme catalyses a D-glucoside + NAD(+) = a 3-dehydro-D-glucoside + NADH + H(+). Its function is as follows. Catalyzes the NADH-dependent reduction of the oxo group at C3 of 3-dehydro-D-glucosides leading to D-glucosides. Probably functions in a metabolic pathway that transforms D-gulosides to D-glucosides. Can use 3-dehydro-D-glucose, methyl alpha-3-dehydro-D-glucoside and methyl beta-3-dehydro-D-glucoside as substrates in vitro. However, the actual specific physiological substrates for this metabolic pathway are unknown. To a lesser extent, is also able to catalyze the reverse reactions, i.e. the NAD(+)-dependent oxidation of the hydroxyl group at C3 of D-glucosides leading to 3-dehydro-D-glucosides. Cannot act on UDP-glucose, UDP-N-acetyl-D-glucosamine, D-glucosamine, N-acetyl-D-glucosamine, or UDP-D-galactose. The sequence is that of D-glucoside 3-dehydrogenase (ycjS) from Escherichia coli (strain K12).